The sequence spans 469 residues: 3-isopropylmalate dehydratase large subunit (469 aa).

3 residues coordinate [4Fe-4S] cluster: cysteine 349, cysteine 410, and cysteine 413.

It belongs to the aconitase/IPM isomerase family. LeuC type 1 subfamily. As to quaternary structure, heterodimer of LeuC and LeuD. [4Fe-4S] cluster serves as cofactor.

It carries out the reaction (2R,3S)-3-isopropylmalate = (2S)-2-isopropylmalate. It functions in the pathway amino-acid biosynthesis; L-leucine biosynthesis; L-leucine from 3-methyl-2-oxobutanoate: step 2/4. Functionally, catalyzes the isomerization between 2-isopropylmalate and 3-isopropylmalate, via the formation of 2-isopropylmaleate. The sequence is that of 3-isopropylmalate dehydratase large subunit from Neisseria gonorrhoeae (strain NCCP11945).